Here is a 376-residue protein sequence, read N- to C-terminus: Cytochrome-c peroxidase IdrP1 (376 aa).

Positions 1 to 24 (MGHIRSIRLALAVAAVCTAASAAA) are cleaved as a signal peptide. Cytochrome c domains are found at residues 49 to 157 (DKVA…AAFK) and 203 to 354 (AEAQ…EALS). Heme c is bound by residues Cys-71, Cys-74, His-75, Cys-218, Cys-221, and His-222.

As to quaternary structure, the iodate reductase (Idr) complex is composed of a molybdopterin-dependent iodate reductase (IdrA and IdrB subunits) and two associated peroxidases (IdrP1 and IdrP2). Heme c serves as cofactor.

The protein localises to the periplasm. It carries out the reaction 2 Fe(II)-[cytochrome c] + H2O2 + 2 H(+) = 2 Fe(III)-[cytochrome c] + 2 H2O. Involved in iodate respiration. May play a critical role in detoxification of inadvertent H(2)O(2) generated by the iodate reductase IdrA/IdrB. The chain is Cytochrome-c peroxidase IdrP1 from Denitromonas iodatirespirans.